Reading from the N-terminus, the 384-residue chain is Guanine nucleotide-binding protein alpha-1 subunit (384 aa).

A lipid anchor (N-myristoyl glycine) is attached at G2. C5 carries the S-palmitoyl cysteine lipid modification. The 347-residue stretch at 38–384 (HIRKLLLLGA…RRNLFEAGLL (347 aa)) folds into the G-alpha domain. The interval 41–54 (KLLLLGAGESGKST) is G1 motif. Residues E49, S50, G51, K52, S53, T54, D163, L188, T194, G222, N288, K289, D291, and A356 each contribute to the GTP site. Mg(2+) is bound at residue S53. Residues 186 to 194 (DVLLARVRT) are G2 motif. Position 194 (T194) interacts with Mg(2+). Positions 215–224 (YRLFDVGGQR) are G3 motif. The G4 motif stretch occupies residues 284–291 (MLFLNKFD). The interval 354 to 359 (TTALDQ) is G5 motif.

The protein belongs to the G-alpha family. G proteins are composed of 3 units; alpha, beta and gamma. The alpha chain contains the guanine nucleotide binding site. The cofactor is Mg(2+).

In terms of biological role, guanine nucleotide-binding proteins (G proteins) are involved as modulators or transducers in various transmembrane signaling systems. This Pisum sativum (Garden pea) protein is Guanine nucleotide-binding protein alpha-1 subunit (GPA1).